The sequence spans 424 residues: CinA-like protein (424 aa).

This sequence belongs to the CinA family.

The chain is CinA-like protein from Syntrophobacter fumaroxidans (strain DSM 10017 / MPOB).